The chain runs to 345 residues: DNA primase small subunit PriS (345 aa).

Residues aspartate 95 and aspartate 97 contribute to the active site. Zn(2+)-binding residues include cysteine 106, histidine 108, cysteine 114, and cysteine 117. The short motif at 106-117 (CNHEPGKVCPIC) is the Zinc knuckle motif element. Aspartate 280 is a catalytic residue.

This sequence belongs to the eukaryotic-type primase small subunit family. In terms of assembly, heterodimer of a small subunit (PriS) and a large subunit (PriL). It depends on Mg(2+) as a cofactor. The cofactor is Mn(2+).

Its function is as follows. Catalytic subunit of DNA primase, an RNA polymerase that catalyzes the synthesis of short RNA molecules used as primers for DNA polymerase during DNA replication. The small subunit contains the primase catalytic core and has DNA synthesis activity on its own, synthesizing DNA strands up to 3 kB. Binding to the large subunit stabilizes and modulates the activity, increasing the rate of DNA synthesis while decreasing the length of the DNA fragments, and conferring RNA synthesis capability for RNA fragments up to 150 bases. The DNA polymerase activity may enable DNA primase to also catalyze primer extension after primer synthesis. May also play a role in DNA repair. Displays gap-filling and strand-displacement activities. This Pyrococcus abyssi (strain GE5 / Orsay) protein is DNA primase small subunit PriS.